The sequence spans 261 residues: Trifolitoxin immunity protein (261 aa).

In terms of biological role, required for TFX resistance. In Rhizobium leguminosarum bv. trifolii, this protein is Trifolitoxin immunity protein (tfxG).